A 518-amino-acid chain; its full sequence is GTPase MTG2, mitochondrial (518 aa).

A mitochondrion-targeting transit peptide spans 1–23; it reads MSIAWSSVFKRELRLERFLPRVY. An Obg domain is found at 89–339; it reads GNFVDVRIVK…QHFLFELKSI (251 aa). The 173-residue stretch at 340 to 512 folds into the OBG-type G domain; it reads ADLGLIGLPN…LKKKMFKCAR (173 aa). Residues 346-353, 394-398, and 460-463 each bind GTP; these read GLPNAGKS, DIPGI, and NKVD.

This sequence belongs to the TRAFAC class OBG-HflX-like GTPase superfamily. OBG GTPase family. As to quaternary structure, interacts with the mitochondrial 54S large ribosomal subunit.

The protein resides in the mitochondrion inner membrane. In terms of biological role, required for mitochondrial protein synthesis. May be involved in mitochondrial ribosome biogenesis. The sequence is that of GTPase MTG2, mitochondrial (MTG2) from Saccharomyces cerevisiae (strain ATCC 204508 / S288c) (Baker's yeast).